We begin with the raw amino-acid sequence, 339 residues long: MQDKLNQIKELALVEIKKAKDSTTIDTIRVKYLGKKGELTTILRGMGSLSKEERPIVGKLANEVREVLEAELEAVTKAVKEAEKQEKLKNEVIDISMPGKKQTIGKKHPLEQTLDEMKKIFVSMGFAIEDGPEVEKDYYNFEALNIPKNHPARSEQDTFYINDNIVLRTQTSPVQARVMEKQQPPIKMISPGKVFRSDAVDATHSPIFYQMEGLVIDKDITFADLKGTLELFAKKMFGDKVKTKFRPHHFPFTEPSAEMDATCFVCNGKGCKVCKGEGWIEILGCGMVHPQVLRNCGIDPEVYSGFAFGFGVDRMVMLKYGIDDIRLLYESDMRFLNQF.

E254 serves as a coordination point for Mg(2+).

This sequence belongs to the class-II aminoacyl-tRNA synthetase family. Phe-tRNA synthetase alpha subunit type 1 subfamily. Tetramer of two alpha and two beta subunits. Requires Mg(2+) as cofactor.

Its subcellular location is the cytoplasm. It catalyses the reaction tRNA(Phe) + L-phenylalanine + ATP = L-phenylalanyl-tRNA(Phe) + AMP + diphosphate + H(+). This chain is Phenylalanine--tRNA ligase alpha subunit, found in Clostridium perfringens (strain SM101 / Type A).